The chain runs to 80 residues: Kappa-actitoxin-Avd4f (80 aa).

Positions 1–19 (MNKALFLCLVVLCAAVVFA) are cleaved as a signal peptide. A propeptide spanning residues 20–31 (AEDLQKAKHAPF) is cleaved from the precursor. 3 cysteine pairs are disulfide-bonded: Cys-41–Cys-76, Cys-43–Cys-69, and Cys-59–Cys-77.

The protein belongs to the sea anemone type 3 (BDS) potassium channel toxin family. In terms of tissue distribution, moderately expressed in the ectodermal tissue from the distal and proximal tentacles, body wall, and oral disk.

It is found in the secreted. The protein localises to the nematocyst. In terms of biological role, blocks Kv3 voltage-gated potassium channels. Reduces blood pressure. The chain is Kappa-actitoxin-Avd4f from Anemonia viridis (Snakelocks anemone).